Reading from the N-terminus, the 348-residue chain is Dihydroorotase (348 aa).

Histidine 17 and histidine 19 together coordinate Zn(2+). Residues 19–21 (HLR) and asparagine 45 each bind substrate. 3 residues coordinate Zn(2+): lysine 103, histidine 140, and histidine 178. Lysine 103 bears the N6-carboxylysine mark. Substrate is bound at residue histidine 140. Leucine 223 contributes to the substrate binding site. Aspartate 251 lines the Zn(2+) pocket. Residue aspartate 251 is part of the active site. Substrate contacts are provided by histidine 255 and alanine 267.

The protein belongs to the metallo-dependent hydrolases superfamily. DHOase family. Class II DHOase subfamily. As to quaternary structure, homodimer. The cofactor is Zn(2+).

The enzyme catalyses (S)-dihydroorotate + H2O = N-carbamoyl-L-aspartate + H(+). It participates in pyrimidine metabolism; UMP biosynthesis via de novo pathway; (S)-dihydroorotate from bicarbonate: step 3/3. In terms of biological role, catalyzes the reversible cyclization of carbamoyl aspartate to dihydroorotate. In Escherichia fergusonii (strain ATCC 35469 / DSM 13698 / CCUG 18766 / IAM 14443 / JCM 21226 / LMG 7866 / NBRC 102419 / NCTC 12128 / CDC 0568-73), this protein is Dihydroorotase.